The primary structure comprises 359 residues: Membrane-bound lytic murein transglycosylase C (359 aa).

Residues 1–16 (MKKYLALALIAPLLIS) form the signal peptide. Residue Cys17 is the site of N-palmitoyl cysteine attachment. The S-diacylglycerol cysteine moiety is linked to residue Cys17.

It belongs to the transglycosylase Slt family.

The protein localises to the cell outer membrane. The enzyme catalyses Exolytic cleavage of the (1-&gt;4)-beta-glycosidic linkage between N-acetylmuramic acid (MurNAc) and N-acetylglucosamine (GlcNAc) residues in peptidoglycan, from either the reducing or the non-reducing ends of the peptidoglycan chains, with concomitant formation of a 1,6-anhydrobond in the MurNAc residue.. Murein-degrading enzyme. May play a role in recycling of muropeptides during cell elongation and/or cell division. This is Membrane-bound lytic murein transglycosylase C from Escherichia coli (strain SMS-3-5 / SECEC).